We begin with the raw amino-acid sequence, 214 residues long: Adenylate kinase (214 aa).

10-15 (GAGKGT) is a binding site for ATP. The segment at 30 to 59 (STGDMLRAAVKAGTPLGLEAKKVMDAGQLV) is NMP. Residues Thr31, Arg36, 57-59 (QLV), 85-88 (GFPR), and Gln92 each bind AMP. The LID stretch occupies residues 122–159 (GRRVHPGSGRVYHVVFNPPKVEGKDDVTGEDLAIRPDD). ATP-binding positions include Arg123 and 132–133 (VY). AMP-binding residues include Arg156 and Arg167. Gln200 is a binding site for ATP.

It belongs to the adenylate kinase family. As to quaternary structure, monomer.

The protein localises to the cytoplasm. It carries out the reaction AMP + ATP = 2 ADP. It functions in the pathway purine metabolism; AMP biosynthesis via salvage pathway; AMP from ADP: step 1/1. In terms of biological role, catalyzes the reversible transfer of the terminal phosphate group between ATP and AMP. Plays an important role in cellular energy homeostasis and in adenine nucleotide metabolism. This chain is Adenylate kinase, found in Shewanella baltica (strain OS155 / ATCC BAA-1091).